The primary structure comprises 262 residues: MASFGWKRKIGEKVSKVTSQQFEAEAADEKDVVDNDEGNWLHAIKRRKEILLEGCAEKSKQLKDEGASLAENKRYREAIQKWDEALQLTPNDATLYEMKSQVLMSLHEMFPAVHAAEMAVQQNPHSWESWQTLGRAQLGLGEIILAIRSFQVALHIYPMNPEIWKEDLSWARTLQEQQKVAQRIKKSEAPAEVTHFSPKSIPDYDFESDEIVAVCAAIAEKEKTVSANKTMVIVSASGAIETVTEKEDGATPPDGSVFIKAR.

TPR repeat units follow at residues 59-92 (SKQL…TPND), 93-126 (ATLY…NPHS), and 127-160 (WESW…YPMN). S197 bears the Phosphoserine mark. The residue at position 251 (T251) is a Phosphothreonine.

This chain is Tetratricopeptide repeat protein 33 (TTC33), found in Homo sapiens (Human).